The chain runs to 620 residues: UvrABC system protein C (620 aa).

Residues 13–92 (DKPGVYIMKN…IKKYSPRYNI (80 aa)) form the GIY-YIG domain. The 36-residue stretch at 204–239 (TSIIKKLKLEMEKAAEELEFEKAAKIRDRILAIELI) folds into the UVR domain.

This sequence belongs to the UvrC family. In terms of assembly, interacts with UvrB in an incision complex.

It localises to the cytoplasm. Its function is as follows. The UvrABC repair system catalyzes the recognition and processing of DNA lesions. UvrC both incises the 5' and 3' sides of the lesion. The N-terminal half is responsible for the 3' incision and the C-terminal half is responsible for the 5' incision. The protein is UvrABC system protein C of Clostridium perfringens (strain 13 / Type A).